The following is a 690-amino-acid chain: uncharacterized protein (690 aa).

It to M.genitalium MG366 and M.pneumoniae MPN544.

This is an uncharacterized protein from Ureaplasma parvum serovar 3 (strain ATCC 700970).